A 280-amino-acid chain; its full sequence is Pantothenate synthetase (280 aa).

ATP is bound at residue 26–33 (MGNLHEGH). Histidine 33 (proton donor) is an active-site residue. Glutamine 57 contributes to the (R)-pantoate binding site. Glutamine 57 contributes to the beta-alanine binding site. Residue 145 to 148 (GKKD) participates in ATP binding. Position 151 (glutamine 151) interacts with (R)-pantoate. ATP is bound by residues valine 174 and 182-185 (LSSR).

The protein belongs to the pantothenate synthetase family. As to quaternary structure, homodimer.

The protein resides in the cytoplasm. It catalyses the reaction (R)-pantoate + beta-alanine + ATP = (R)-pantothenate + AMP + diphosphate + H(+). Its pathway is cofactor biosynthesis; (R)-pantothenate biosynthesis; (R)-pantothenate from (R)-pantoate and beta-alanine: step 1/1. Catalyzes the condensation of pantoate with beta-alanine in an ATP-dependent reaction via a pantoyl-adenylate intermediate. The protein is Pantothenate synthetase of Bordetella avium (strain 197N).